Consider the following 86-residue polypeptide: Large ribosomal subunit protein bL31B (86 aa).

The protein belongs to the bacterial ribosomal protein bL31 family. Type B subfamily. Part of the 50S ribosomal subunit.

The polypeptide is Large ribosomal subunit protein bL31B (Yersinia pseudotuberculosis serotype O:1b (strain IP 31758)).